The following is a 178-amino-acid chain: Large ribosomal subunit protein bL17 (178 aa).

Positions 126–139 are enriched in basic and acidic residues; sequence DRARRVAASKKAEE. The interval 126-178 is disordered; the sequence is DRARRVAASKKAEEQAPAAEAEEQAPAAEAEAPAADAAAEAKADEAAEDKKDA. Residues 140-163 show a composition bias toward low complexity; that stretch reads QAPAAEAEEQAPAAEAEAPAADAA. The segment covering 164–178 has biased composition (basic and acidic residues); sequence AEAKADEAAEDKKDA.

It belongs to the bacterial ribosomal protein bL17 family. As to quaternary structure, part of the 50S ribosomal subunit. Contacts protein L32.

In Nocardia farcinica (strain IFM 10152), this protein is Large ribosomal subunit protein bL17.